A 146-amino-acid polypeptide reads, in one-letter code: Small ribosomal subunit protein uS5 (146 aa).

The region spanning 8 to 71 (FQEAIVKIGR…DDAFKSLVTV (64 aa)) is the S5 DRBM domain.

It belongs to the universal ribosomal protein uS5 family. Part of the 30S ribosomal subunit. Contacts proteins S4 and S8.

With S4 and S12 plays an important role in translational accuracy. In terms of biological role, located at the back of the 30S subunit body where it stabilizes the conformation of the head with respect to the body. The protein is Small ribosomal subunit protein uS5 of Aliarcobacter butzleri (strain RM4018) (Arcobacter butzleri).